The primary structure comprises 510 residues: MKLAYWMYAGPAHIGTLRVASSFKNVHAIMHAPLGDDYFNVMRSMLERERDFTPVTASIVDRHVLARGSQEKVIENITRKDKEENPDLIILTPTCTSSILQEDLQNFVNRAGLDSKSDVILADVNHYRVNELQAADRTLEQIIRFYLEKARSQSNEPLRKTEKPSANILGIFTLGFHNQHDCRELKRLLTDLGIVINQILPEGGSVTNINELPKAWFNLIPYREVGLMAANYLKNEYDMPYVAVTPMGLLDTENCIREIVDIVKSSDTSYNFDFETYIDTQTRFISQAAWFSRSIDCQNLTGKKAVVFGDATHAASITKILAREMGIRVSCSGTYCKHDADWFREQVDGFCDEVLITDDHTQVADMIARIEPAAIFGTQMERHIGKRLDIPCGVISAPVHIQNFPLGFRPFLGYEGTNQISDLVYNSFTLGMEDHLLEIFGGHDTKEVITKSLSTDSDLAWAPEALTELQRIPGFVRGKIKRNTEKFAREKNCNLITLEIMFAAKEAVGA.

Aspartate 36 contacts [4Fe-4S] cluster. The active-site Proton donor is aspartate 296. Residue 431-432 participates in substrate binding; the sequence is GM.

This sequence belongs to the ChlB/BchB/BchZ family. Protochlorophyllide reductase is composed of three subunits; ChlL, ChlN and ChlB. Forms a heterotetramer of two ChlB and two ChlN subunits. It depends on [4Fe-4S] cluster as a cofactor.

It localises to the plastid. Its subcellular location is the chloroplast. The catalysed reaction is chlorophyllide a + oxidized 2[4Fe-4S]-[ferredoxin] + 2 ADP + 2 phosphate = protochlorophyllide a + reduced 2[4Fe-4S]-[ferredoxin] + 2 ATP + 2 H2O. It participates in porphyrin-containing compound metabolism; chlorophyll biosynthesis (light-independent). Its function is as follows. Component of the dark-operative protochlorophyllide reductase (DPOR) that uses Mg-ATP and reduced ferredoxin to reduce ring D of protochlorophyllide (Pchlide) to form chlorophyllide a (Chlide). This reaction is light-independent. The NB-protein (ChlN-ChlB) is the catalytic component of the complex. The polypeptide is Light-independent protochlorophyllide reductase subunit B (Auxenochlorella protothecoides (Green microalga)).